A 139-amino-acid chain; its full sequence is D-ribose pyranase (139 aa).

His-20 (proton donor) is an active-site residue. Substrate is bound by residues Asp-28, His-106, and 128 to 130 (FAN).

The protein belongs to the RbsD / FucU family. RbsD subfamily. Homodecamer.

Its subcellular location is the cytoplasm. It catalyses the reaction beta-D-ribopyranose = beta-D-ribofuranose. Its pathway is carbohydrate metabolism; D-ribose degradation; D-ribose 5-phosphate from beta-D-ribopyranose: step 1/2. Catalyzes the interconversion of beta-pyran and beta-furan forms of D-ribose. The polypeptide is D-ribose pyranase (Yersinia pseudotuberculosis serotype O:1b (strain IP 31758)).